We begin with the raw amino-acid sequence, 88 residues long: MPNIKSAKKRVRVTRKKTLRNKHVKTMVKTAIKKFELALQNEDVETAREELKNATKTIDKAVSKGVIHKNNAARKKSRLTAKFNNIAS.

Belongs to the bacterial ribosomal protein bS20 family.

Its function is as follows. Binds directly to 16S ribosomal RNA. This chain is Small ribosomal subunit protein bS20, found in Natranaerobius thermophilus (strain ATCC BAA-1301 / DSM 18059 / JW/NM-WN-LF).